Here is a 226-residue protein sequence, read N- to C-terminus: Phosphoenolpyruvate guanylyltransferase (226 aa).

Residues Thr-145, Gly-161, and Ser-164 each coordinate phosphoenolpyruvate.

Belongs to the CofC family.

The catalysed reaction is phosphoenolpyruvate + GTP + H(+) = enolpyruvoyl-2-diphospho-5'-guanosine + diphosphate. The protein operates within cofactor biosynthesis; coenzyme F420 biosynthesis. In terms of biological role, guanylyltransferase that catalyzes the activation of phosphoenolpyruvate (PEP) as enolpyruvoyl-2-diphospho-5'-guanosine, via the condensation of PEP with GTP. It is involved in the biosynthesis of coenzyme F420, a hydride carrier cofactor. This Nocardia farcinica (strain IFM 10152) protein is Phosphoenolpyruvate guanylyltransferase.